A 358-amino-acid polypeptide reads, in one-letter code: Dynein axonemal assembly factor 10 (358 aa).

6 WD repeats span residues E64 to Y106, N116 to V155, E163 to E206, N208 to G250, A258 to K298, and L320 to V358.

Interacts with PIH1D1; the interaction associates DNAAF10 with the R2TP complex. Interacts with several dynein axonemal assembly factors.

The protein localises to the dynein axonemal particle. In terms of biological role, key assembly factor specifically required for the stability of axonemal dynein heavy chains in cytoplasm. The sequence is that of Dynein axonemal assembly factor 10 (dnaaf10) from Danio rerio (Zebrafish).